The chain runs to 470 residues: tRNA-2-methylthio-N(6)-dimethylallyladenosine synthase (470 aa).

Positions 1–116 (MTYTVRTYGC…LPALLRRSRH (116 aa)) constitute an MTTase N-terminal domain. [4Fe-4S] cluster-binding residues include Cys10, Cys45, Cys79, Cys153, Cys157, and Cys160. Residues 139–369 (RESNYSAWVS…LDLQNRIALE (231 aa)) enclose the Radical SAM core domain. In terms of domain architecture, TRAM spans 372 to 439 (RKLIGKEVEL…PYHLIGDNAL (68 aa)).

This sequence belongs to the methylthiotransferase family. MiaB subfamily. In terms of assembly, monomer. It depends on [4Fe-4S] cluster as a cofactor.

Its subcellular location is the cytoplasm. It carries out the reaction N(6)-dimethylallyladenosine(37) in tRNA + (sulfur carrier)-SH + AH2 + 2 S-adenosyl-L-methionine = 2-methylsulfanyl-N(6)-dimethylallyladenosine(37) in tRNA + (sulfur carrier)-H + 5'-deoxyadenosine + L-methionine + A + S-adenosyl-L-homocysteine + 2 H(+). Catalyzes the methylthiolation of N6-(dimethylallyl)adenosine (i(6)A), leading to the formation of 2-methylthio-N6-(dimethylallyl)adenosine (ms(2)i(6)A) at position 37 in tRNAs that read codons beginning with uridine. The polypeptide is tRNA-2-methylthio-N(6)-dimethylallyladenosine synthase (Tropheryma whipplei (strain Twist) (Whipple's bacillus)).